A 505-amino-acid chain; its full sequence is Amidophosphoribosyltransferase (505 aa).

C2 acts as the Nucleophile in catalysis. Residues 2 to 236 (CGIVGIAGVM…PGEAIYITEE (235 aa)) form the Glutamine amidotransferase type-2 domain. The Mg(2+) site is built by T305, D367, and D368.

It in the C-terminal section; belongs to the purine/pyrimidine phosphoribosyltransferase family. In terms of assembly, homotetramer. Mg(2+) is required as a cofactor.

It catalyses the reaction 5-phospho-beta-D-ribosylamine + L-glutamate + diphosphate = 5-phospho-alpha-D-ribose 1-diphosphate + L-glutamine + H2O. Its pathway is purine metabolism; IMP biosynthesis via de novo pathway; N(1)-(5-phospho-D-ribosyl)glycinamide from 5-phospho-alpha-D-ribose 1-diphosphate: step 1/2. With respect to regulation, inhibited by iodoacetamide and by the glutamine analogs chloroketone and DON. Catalyzes the formation of phosphoribosylamine from phosphoribosylpyrophosphate (PRPP) and glutamine. Can also use NH(3) in place of glutamine. In Escherichia coli (strain K12), this protein is Amidophosphoribosyltransferase.